The primary structure comprises 523 residues: Leucine-rich repeat-containing protein 27 (523 aa).

Residues 1–26 (MEDTSPQAVAEKAAKDPKAAKDLKDD) are disordered. Basic and acidic residues predominate over residues 12–26 (KAAKDPKAAKDLKDD). 5 LRR repeats span residues 55 to 76 (SSPV…FKIP), 77 to 98 (NLQQ…FFQL), 101 to 122 (NLTW…IGSH), 124 to 145 (HLKT…LGQV), and 147 to 168 (TLTA…IVQK). Disordered stretches follow at residues 206–236 (QYPV…ADFF) and 372–394 (REQT…HSNM). Basic and acidic residues-rich tracts occupy residues 227-236 (DQEKEKADFF) and 372-385 (REQT…RELS). 2 coiled-coil regions span residues 335–374 (VHAN…WREQ) and 463–494 (MQDI…TLNK). A disordered region spans residues 503–523 (GNLSLHPPASQPQNIFFNTKS). Polar residues predominate over residues 513-523 (QPQNIFFNTKS).

This Mus musculus (Mouse) protein is Leucine-rich repeat-containing protein 27 (Lrrc27).